Here is a 360-residue protein sequence, read N- to C-terminus: Peptide chain release factor 1 (360 aa).

Residue Gln-235 is modified to N5-methylglutamine.

It belongs to the prokaryotic/mitochondrial release factor family. In terms of processing, methylated by PrmC. Methylation increases the termination efficiency of RF1.

It localises to the cytoplasm. In terms of biological role, peptide chain release factor 1 directs the termination of translation in response to the peptide chain termination codons UAG and UAA. In Janthinobacterium sp. (strain Marseille) (Minibacterium massiliensis), this protein is Peptide chain release factor 1.